We begin with the raw amino-acid sequence, 406 residues long: Isocitrate dehydrogenase [NADP] (406 aa).

The NADP(+) site is built by Lys-72, Thr-75, Thr-77, and Arg-82. The D-threo-isocitrate site is built by Ser-94, Asn-96, Arg-100, Glu-110, and Arg-132. Residues Asp-250, Asp-273, and Asp-277 each contribute to the Mn(2+) site. Positions 308, 309, 310, 313, and 326 each coordinate NADP(+).

This sequence belongs to the isocitrate and isopropylmalate dehydrogenases family. As to quaternary structure, homodimer. The cofactor is Mg(2+). Mn(2+) serves as cofactor.

It carries out the reaction D-threo-isocitrate + NADP(+) = 2-oxoglutarate + CO2 + NADPH. Catalyzes the oxidative decarboxylation of isocitrate to 2-oxoglutarate and carbon dioxide with the concomitant reduction of NADP(+). This chain is Isocitrate dehydrogenase [NADP] (icd), found in Sphingobium yanoikuyae (Sphingomonas yanoikuyae).